Here is a 730-residue protein sequence, read N- to C-terminus: Catalase-peroxidase 1 (730 aa).

Positions 92–217 (WHSAGTYRTT…LGAAVMGLIY (126 aa)) form a cross-link, tryptophyl-tyrosyl-methioninium (Trp-Tyr) (with M-243). H93 (proton acceptor) is an active-site residue. The segment at residues 217–243 (YVDPEGPNGNPDPLASAENIRESFGRM) is a cross-link (tryptophyl-tyrosyl-methioninium (Tyr-Met) (with W-92)). H258 provides a ligand contact to heme b.

Belongs to the peroxidase family. Peroxidase/catalase subfamily. Homodimer or homotetramer. Requires heme b as cofactor. Formation of the three residue Trp-Tyr-Met cross-link is important for the catalase, but not the peroxidase activity of the enzyme.

It carries out the reaction H2O2 + AH2 = A + 2 H2O. It catalyses the reaction 2 H2O2 = O2 + 2 H2O. Its function is as follows. Bifunctional enzyme with both catalase and broad-spectrum peroxidase activity. The sequence is that of Catalase-peroxidase 1 from Haloarcula marismortui (strain ATCC 43049 / DSM 3752 / JCM 8966 / VKM B-1809) (Halobacterium marismortui).